The sequence spans 238 residues: Protein-lysine N-methyltransferase efm4 (238 aa).

It belongs to the class I-like SAM-binding methyltransferase superfamily. EFM4 family.

It localises to the cytoplasm. The protein localises to the nucleus. Functionally, S-adenosyl-L-methionine-dependent protein-lysine N-methyltransferase that mono- and dimethylates elongation factor 1-alpha at 'Lys-316'. May play a role in intracellular transport. The chain is Protein-lysine N-methyltransferase efm4 from Schizosaccharomyces pombe (strain 972 / ATCC 24843) (Fission yeast).